The sequence spans 171 residues: uncharacterized protein (171 aa).

Positions 1–20 are cleaved as a signal peptide; sequence MRRVLFSCFCGLLWSSSGWA. Residues Cys-40 and Cys-80 are joined by a disulfide bond.

It belongs to the fimbrial protein family.

The protein localises to the fimbrium. Its function is as follows. Part of the sfmACDHF fimbrial operon. Could contribute to adhesion to various surfaces in specific environmental niches. Increases adhesion to eukaryotic T24 bladder epithelial cells in the absence of fim genes. This is an uncharacterized protein from Escherichia coli (strain K12).